A 102-amino-acid chain; its full sequence is Large ribosomal subunit protein uL23 (102 aa).

This sequence belongs to the universal ribosomal protein uL23 family. Part of the 50S ribosomal subunit. Contacts protein L29, and trigger factor when it is bound to the ribosome.

Functionally, one of the early assembly proteins it binds 23S rRNA. One of the proteins that surrounds the polypeptide exit tunnel on the outside of the ribosome. Forms the main docking site for trigger factor binding to the ribosome. In Paramagnetospirillum magneticum (strain ATCC 700264 / AMB-1) (Magnetospirillum magneticum), this protein is Large ribosomal subunit protein uL23.